The following is a 341-amino-acid chain: HTH-type transcriptional repressor PurR (341 aa).

The HTH lacI-type domain occupies 2-56; that stretch reads ATIKDVAKRANVSTTTVSHVINKTRFVAEETRNAVWAAIKELHYSPSAVARSLKV. The segment at residues 4–23 is a DNA-binding region (H-T-H motif); the sequence is IKDVAKRANVSTTTVSHVIN. Residues 48–56 mediate DNA binding; it reads SAVARSLKV. Residues tyrosine 73, arginine 190, threonine 192, phenylalanine 221, and aspartate 275 each coordinate hypoxanthine.

In terms of assembly, homodimer.

It participates in purine metabolism; purine nucleotide biosynthesis [regulation]. Its function is as follows. Is the main repressor of the genes involved in the de novo synthesis of purine nucleotides, regulating purB, purC, purEK, purF, purHD, purL, purMN and guaBA expression. PurR is allosterically activated to bind its cognate DNA by binding the purine corepressors, hypoxanthine or guanine, thereby effecting transcription repression. This Shigella dysenteriae serotype 1 (strain Sd197) protein is HTH-type transcriptional repressor PurR.